Reading from the N-terminus, the 367-residue chain is Cobalt-precorrin-5B C(1)-methyltransferase (367 aa).

This sequence belongs to the CbiD family.

The enzyme catalyses Co-precorrin-5B + S-adenosyl-L-methionine = Co-precorrin-6A + S-adenosyl-L-homocysteine. It functions in the pathway cofactor biosynthesis; adenosylcobalamin biosynthesis; cob(II)yrinate a,c-diamide from sirohydrochlorin (anaerobic route): step 6/10. Catalyzes the methylation of C-1 in cobalt-precorrin-5B to form cobalt-precorrin-6A. In Leptospira interrogans serogroup Icterohaemorrhagiae serovar copenhageni (strain Fiocruz L1-130), this protein is Cobalt-precorrin-5B C(1)-methyltransferase.